The sequence spans 255 residues: H-2 class II histocompatibility antigen, E-K alpha chain (255 aa).

The signal sequence occupies residues 1–25 (MATIGALVLRFFFIAVLMSSQKSWA). The alpha-1 stretch occupies residues 26-109 (IKEEHTIIQA…ERSNNTPDAN (84 aa)). Residues 26–216 (IKEEHTIIQA…EKTLLPETKE (191 aa)) are Extracellular-facing. Residues 110 to 203 (VAPEVTVLSR…GLEEPLRKHW (94 aa)) form an alpha-2 region. The Ig-like C1-type domain occupies 112 to 204 (PEVTVLSRSP…LEEPLRKHWE (93 aa)). Residues Cys132 and Cys188 are joined by a disulfide bond. Asn143 carries an N-linked (GlcNAc...) asparagine glycan. Positions 204–216 (EFEEKTLLPETKE) are connecting peptide. Residues 217 to 242 (NVVCALGLFVGLVGIVVGIILIMKGI) traverse the membrane as a helical segment. Residues 243-255 (KKRNVVERRQGAL) lie on the Cytoplasmic side of the membrane.

Belongs to the MHC class II family.

It is found in the membrane. This chain is H-2 class II histocompatibility antigen, E-K alpha chain, found in Mus musculus (Mouse).